Consider the following 698-residue polypeptide: Polyphosphate kinase 1 (698 aa).

Position 46 (Asn-46) interacts with ATP. 2 residues coordinate Mg(2+): Arg-377 and Arg-407. Residue His-437 is the Phosphohistidine intermediate of the active site. Residues Tyr-470, Arg-566, and His-594 each coordinate ATP.

This sequence belongs to the polyphosphate kinase 1 (PPK1) family. Mg(2+) is required as a cofactor. In terms of processing, an intermediate of this reaction is the autophosphorylated ppk in which a phosphate is covalently linked to a histidine residue through a N-P bond.

The enzyme catalyses [phosphate](n) + ATP = [phosphate](n+1) + ADP. In terms of biological role, catalyzes the reversible transfer of the terminal phosphate of ATP to form a long-chain polyphosphate (polyP). The chain is Polyphosphate kinase 1 from Chlorobaculum tepidum (strain ATCC 49652 / DSM 12025 / NBRC 103806 / TLS) (Chlorobium tepidum).